Consider the following 338-residue polypeptide: Glycerol-3-phosphate dehydrogenase [NAD(P)+] (338 aa).

S13, W14, and K108 together coordinate NADPH. Sn-glycerol 3-phosphate-binding residues include K108, G139, and S141. A143 is a binding site for NADPH. Sn-glycerol 3-phosphate-binding residues include K194, D247, S257, R258, and N259. Residue K194 is the Proton acceptor of the active site. Residue R258 coordinates NADPH. Positions 282 and 284 each coordinate NADPH.

Belongs to the NAD-dependent glycerol-3-phosphate dehydrogenase family.

It localises to the cytoplasm. It carries out the reaction sn-glycerol 3-phosphate + NAD(+) = dihydroxyacetone phosphate + NADH + H(+). The catalysed reaction is sn-glycerol 3-phosphate + NADP(+) = dihydroxyacetone phosphate + NADPH + H(+). Its pathway is membrane lipid metabolism; glycerophospholipid metabolism. Its function is as follows. Catalyzes the reduction of the glycolytic intermediate dihydroxyacetone phosphate (DHAP) to sn-glycerol 3-phosphate (G3P), the key precursor for phospholipid synthesis. This is Glycerol-3-phosphate dehydrogenase [NAD(P)+] from Streptococcus agalactiae serotype III (strain NEM316).